Consider the following 81-residue polypeptide: Small ribosomal subunit protein bS18 (81 aa).

This sequence belongs to the bacterial ribosomal protein bS18 family. As to quaternary structure, part of the 30S ribosomal subunit. Forms a tight heterodimer with protein bS6.

Its function is as follows. Binds as a heterodimer with protein bS6 to the central domain of the 16S rRNA, where it helps stabilize the platform of the 30S subunit. The chain is Small ribosomal subunit protein bS18 from Desulfotalea psychrophila (strain LSv54 / DSM 12343).